Consider the following 364-residue polypeptide: Mannose-1-phosphate guanyltransferase (364 aa).

It belongs to the transferase hexapeptide repeat family.

It localises to the cytoplasm. The catalysed reaction is alpha-D-mannose 1-phosphate + GTP + H(+) = GDP-alpha-D-mannose + diphosphate. It functions in the pathway nucleotide-sugar biosynthesis; GDP-alpha-D-mannose biosynthesis; GDP-alpha-D-mannose from alpha-D-mannose 1-phosphate (GTP route): step 1/1. Involved in cell wall synthesis where it is required for glycosylation. Involved in cell cycle progression through cell-size checkpoint. The protein is Mannose-1-phosphate guanyltransferase (mpg1) of Emericella nidulans (strain FGSC A4 / ATCC 38163 / CBS 112.46 / NRRL 194 / M139) (Aspergillus nidulans).